The following is a 225-amino-acid chain: 2-amino-5-formylamino-6-ribosylaminopyrimidin-4(3H)-one 5'-monophosphate deformylase (225 aa).

Fe cation is bound by residues Glu-28, His-30, Asp-39, and His-107.

Belongs to the creatininase superfamily. FAPy deformylase family. In terms of assembly, homodimer. Fe(2+) serves as cofactor. The cofactor is Zn(2+).

It carries out the reaction 2-amino-5-formylamino-6-(5-phospho-D-ribosylamino)pyrimidin-4(3H)-one + H2O = 2,5-diamino-6-(1-D-ribosylamino)pyrimidin-4(3H)-one 5'-phosphate + formate + H(+). It participates in cofactor biosynthesis; coenzyme F420 biosynthesis. It functions in the pathway cofactor biosynthesis; riboflavin biosynthesis. In terms of biological role, catalyzes the hydrolysis of the formamide of 2-amino-5-formylamino-6-ribosylamino-4(3H)-pyrimidinone 5'-monophosphate (FAPy) to form 2,5-diamino-6-ribosylamino-4(3H)-pyrimidinone 5'-phosphate (APy). This is 2-amino-5-formylamino-6-ribosylaminopyrimidin-4(3H)-one 5'-monophosphate deformylase from Methanocaldococcus fervens (strain DSM 4213 / JCM 15782 / AG86) (Methanococcus fervens).